Consider the following 552-residue polypeptide: MKNTCGILLNLFLFIGCFLTCSASNTPKVQVHSGEIAGGFEYTYNGRKIYSFLGIPYASPPVQNNRFKEPQPVQPWLGVWNATVPGSACLGIEFGSGSKIIGQEDCLFLNVYTPKLPQENSAGDLMNVIVHIHGGGYYFGEGILYGPHYLLDNNDFVYVSINYRLGVLGFASTGDGVLTGNNGLKDQVAALKWIQQNIVAFGGDPNSVTITGMSAGASSVHNHLISPMSKGLFNRAIIQSGSAFCHWSTAENVAQKTKYIANLMGCPTNNSVEIVECLRSRPAKAIAKSYLNFMPWRNFPFTPFGPTVEVAGYEKFLPDIPEKLVPHDIPVLISIAQDEGLIFSTFLGLENGFNELNNNWNEHLPHILDYNYTISNENLRFKTAQDIKEFYFGDKPISKETKSNLSKMISDRSFGYGTSKAAQHIAAKNTAPVYFYEFGYSGNYSYVAFFDPKSYSRGSSPTHGDETSYVLKMDGFYVYDNEEDRKMIKTMVNIWATFIKSGVPDTENSEIWLPVSKNLADPFRFTKITQQQTFEAREQSTTGIMNFGVAYH.

The signal sequence occupies residues 1–23 (MKNTCGILLNLFLFIGCFLTCSA). An N-linked (GlcNAc...) asparagine glycan is attached at asparagine 81. A disulfide bridge links cysteine 89 with cysteine 106. Serine 214 (acyl-ester intermediate) is an active-site residue. Cysteine 266 and cysteine 277 are disulfide-bonded. Asparagine 269 carries an N-linked (GlcNAc...) asparagine glycan. The Charge relay system role is filled by glutamate 339. Asparagine 371, asparagine 404, and asparagine 443 each carry an N-linked (GlcNAc...) asparagine glycan. Catalysis depends on histidine 463, which acts as the Charge relay system.

This sequence belongs to the type-B carboxylesterase/lipase family.

It catalyses the reaction a carboxylic ester + H2O = an alcohol + a carboxylate + H(+). In terms of biological role, overproduction of nonspecific esterases is a common mechanism of resistance to organophosphate insecticides. The protein is Esterase E4 of Myzus persicae (Green peach aphid).